The following is a 173-amino-acid chain: Photosystem I assembly protein Ycf3 (173 aa).

3 TPR repeats span residues 35–68 (AFVYYRDGMSAQAEGEYAEALEYYEEALTLEEDT), 72–105 (GYILYNMGLIYASNGDHNKALELYHQAIELNPRL), and 120–153 (GEKEKEAGDNEAGEALFDQAADYWIRAIRMAPNN).

It belongs to the Ycf3 family.

It is found in the cellular thylakoid membrane. Functionally, essential for the assembly of the photosystem I (PSI) complex. May act as a chaperone-like factor to guide the assembly of the PSI subunits. The polypeptide is Photosystem I assembly protein Ycf3 (Nostoc punctiforme (strain ATCC 29133 / PCC 73102)).